The following is a 388-amino-acid chain: GTPase Obg (388 aa).

Positions 1-159 constitute an Obg domain; the sequence is MKFVDEAVIK…RELRLELLLL (159 aa). One can recognise an OBG-type G domain in the interval 160–333; sequence ADVGMLGLPN…LCYKLADFME (174 aa). GTP-binding positions include 166-173, 191-195, 213-216, 283-286, and 314-316; these read GLPNAGKS, FTTLI, DIPG, NKVD, and SAV. Positions 173 and 193 each coordinate Mg(2+). Residues 359-380 are disordered; that stretch reads NQGEVITEDDDDWDDWDDEEDD. Residues 364-380 are compositionally biased toward acidic residues; the sequence is ITEDDDDWDDWDDEEDD.

The protein belongs to the TRAFAC class OBG-HflX-like GTPase superfamily. OBG GTPase family. In terms of assembly, monomer. The cofactor is Mg(2+).

It localises to the cytoplasm. Its function is as follows. An essential GTPase which binds GTP, GDP and possibly (p)ppGpp with moderate affinity, with high nucleotide exchange rates and a fairly low GTP hydrolysis rate. Plays a role in control of the cell cycle, stress response, ribosome biogenesis and in those bacteria that undergo differentiation, in morphogenesis control. This is GTPase Obg from Vibrio vulnificus (strain YJ016).